Consider the following 79-residue polypeptide: Ferredoxin oxidoreductase 1 subunit ForD (79 aa).

4Fe-4S ferredoxin-type domains are found at residues 3 to 35 (YVAQ…YTDE) and 37 to 65 (HHAY…RDSI). 8 residues coordinate [4Fe-4S] cluster: C12, C17, C20, C24, C46, C49, C52, and C56.

In terms of assembly, heterotetramer of one alpha, one beta, one delta and one gamma chain. [4Fe-4S] cluster serves as cofactor.

The protein is Ferredoxin oxidoreductase 1 subunit ForD (forD1) of Aquifex aeolicus (strain VF5).